A 402-amino-acid polypeptide reads, in one-letter code: NADH-quinone oxidoreductase subunit D (402 aa).

It belongs to the complex I 49 kDa subunit family. As to quaternary structure, NDH-1 is composed of 14 different subunits. Subunits NuoB, C, D, E, F, and G constitute the peripheral sector of the complex.

Its subcellular location is the cell inner membrane. The catalysed reaction is a quinone + NADH + 5 H(+)(in) = a quinol + NAD(+) + 4 H(+)(out). Its function is as follows. NDH-1 shuttles electrons from NADH, via FMN and iron-sulfur (Fe-S) centers, to quinones in the respiratory chain. The immediate electron acceptor for the enzyme in this species is believed to be ubiquinone. Couples the redox reaction to proton translocation (for every two electrons transferred, four hydrogen ions are translocated across the cytoplasmic membrane), and thus conserves the redox energy in a proton gradient. The chain is NADH-quinone oxidoreductase subunit D from Rhodopseudomonas palustris (strain TIE-1).